Reading from the N-terminus, the 348-residue chain is Phenylalanine--tRNA ligase alpha subunit (348 aa).

A Mg(2+)-binding site is contributed by E259.

The protein belongs to the class-II aminoacyl-tRNA synthetase family. Phe-tRNA synthetase alpha subunit type 1 subfamily. As to quaternary structure, tetramer of two alpha and two beta subunits. The cofactor is Mg(2+).

The protein localises to the cytoplasm. It carries out the reaction tRNA(Phe) + L-phenylalanine + ATP = L-phenylalanyl-tRNA(Phe) + AMP + diphosphate + H(+). The protein is Phenylalanine--tRNA ligase alpha subunit of Lactiplantibacillus plantarum (strain ATCC BAA-793 / NCIMB 8826 / WCFS1) (Lactobacillus plantarum).